A 363-amino-acid polypeptide reads, in one-letter code: Pyrimidine monooxygenase RutA (363 aa).

FMN contacts are provided by residues 49–50 (IK), Asn-115, Glu-124, 140–141 (RY), and Ser-190.

It belongs to the NtaA/SnaA/DszA monooxygenase family. RutA subfamily.

It carries out the reaction uracil + FMNH2 + NADH + O2 = (Z)-3-ureidoacrylate + FMN + NAD(+) + H2O + H(+). The enzyme catalyses thymine + FMNH2 + NADH + O2 = (Z)-2-methylureidoacrylate + FMN + NAD(+) + H2O + H(+). In terms of biological role, catalyzes the pyrimidine ring opening between N-3 and C-4 by an unusual flavin hydroperoxide-catalyzed mechanism, adding oxygen atoms in the process to yield ureidoacrylate peracid, that immediately reacts with FMN forming ureidoacrylate and FMN-N(5)-oxide. The FMN-N(5)-oxide reacts spontaneously with NADH to produce FMN. Requires the flavin reductase RutF to regenerate FMN in vivo. This Escherichia coli O44:H18 (strain 042 / EAEC) protein is Pyrimidine monooxygenase RutA.